The primary structure comprises 124 residues: Putative iron-sulfur cluster insertion protein ErpA 2 (124 aa).

3 residues coordinate iron-sulfur cluster: Cys-52, Cys-116, and Cys-118.

This sequence belongs to the HesB/IscA family. In terms of assembly, homodimer. Iron-sulfur cluster serves as cofactor.

Required for insertion of 4Fe-4S clusters. The polypeptide is Putative iron-sulfur cluster insertion protein ErpA 2 (Burkholderia vietnamiensis (strain G4 / LMG 22486) (Burkholderia cepacia (strain R1808))).